A 326-amino-acid chain; its full sequence is Putative ribose-phosphate pyrophosphokinase 2 (326 aa).

Residues 43–45 (DGE) and 102–103 (RQ) contribute to the ATP site. His-136 lines the Mg(2+) pocket. D-ribose 5-phosphate-binding positions include Asp-226 and 230–234 (NTGKT).

The protein belongs to the ribose-phosphate pyrophosphokinase family. Class I subfamily. Homohexamer. Mg(2+) serves as cofactor.

It localises to the cytoplasm. The catalysed reaction is D-ribose 5-phosphate + ATP = 5-phospho-alpha-D-ribose 1-diphosphate + AMP + H(+). The protein operates within metabolic intermediate biosynthesis; 5-phospho-alpha-D-ribose 1-diphosphate biosynthesis; 5-phospho-alpha-D-ribose 1-diphosphate from D-ribose 5-phosphate (route I): step 1/1. Functionally, involved in the biosynthesis of the central metabolite phospho-alpha-D-ribosyl-1-pyrophosphate (PRPP) via the transfer of pyrophosphoryl group from ATP to 1-hydroxyl of ribose-5-phosphate (Rib-5-P). The sequence is that of Putative ribose-phosphate pyrophosphokinase 2 from Streptococcus mutans serotype c (strain ATCC 700610 / UA159).